Consider the following 489-residue polypeptide: Putative BTB/POZ domain-containing protein R773 (489 aa).

The region spanning 3–73 is the BTB domain; the sequence is SNIELVITDE…GNTSYKFQDK (71 aa).

It belongs to the mimivirus BTB/WD family.

The protein is Putative BTB/POZ domain-containing protein R773 of Acanthamoeba polyphaga (Amoeba).